The chain runs to 218 residues: Protein-lysine N-methyltransferase M142.8 (218 aa).

This sequence belongs to the class I-like SAM-binding methyltransferase superfamily. EFM5 family.

The protein resides in the cytoplasm. Its function is as follows. S-adenosyl-L-methionine-dependent protein-lysine N-methyltransferase that methylates elongation factor 1-alpha. The chain is Protein-lysine N-methyltransferase M142.8 from Caenorhabditis elegans.